A 296-amino-acid chain; its full sequence is Acetyl-coenzyme A carboxylase carboxyl transferase subunit beta (296 aa).

Residues 25-294 (VWTKCTSCEQ…PFVEPELISE (270 aa)) enclose the CoA carboxyltransferase N-terminal domain. Zn(2+) is bound by residues Cys-29, Cys-32, Cys-48, and Cys-51. A C4-type zinc finger spans residues 29 to 51 (CTSCEQVLYSEELKRNLYVCPKC).

It belongs to the AccD/PCCB family. In terms of assembly, acetyl-CoA carboxylase is a heterohexamer composed of biotin carboxyl carrier protein (AccB), biotin carboxylase (AccC) and two subunits each of ACCase subunit alpha (AccA) and ACCase subunit beta (AccD). It depends on Zn(2+) as a cofactor.

It localises to the cytoplasm. It catalyses the reaction N(6)-carboxybiotinyl-L-lysyl-[protein] + acetyl-CoA = N(6)-biotinyl-L-lysyl-[protein] + malonyl-CoA. Its pathway is lipid metabolism; malonyl-CoA biosynthesis; malonyl-CoA from acetyl-CoA: step 1/1. Component of the acetyl coenzyme A carboxylase (ACC) complex. Biotin carboxylase (BC) catalyzes the carboxylation of biotin on its carrier protein (BCCP) and then the CO(2) group is transferred by the transcarboxylase to acetyl-CoA to form malonyl-CoA. This chain is Acetyl-coenzyme A carboxylase carboxyl transferase subunit beta, found in Haemophilus influenzae (strain PittEE).